A 643-amino-acid chain; its full sequence is Fructose-1,6-bisphosphatase class 3 (643 aa).

Belongs to the FBPase class 3 family. Mn(2+) serves as cofactor.

It carries out the reaction beta-D-fructose 1,6-bisphosphate + H2O = beta-D-fructose 6-phosphate + phosphate. It functions in the pathway carbohydrate biosynthesis; gluconeogenesis. The chain is Fructose-1,6-bisphosphatase class 3 from Streptococcus agalactiae serotype Ia (strain ATCC 27591 / A909 / CDC SS700).